Consider the following 382-residue polypeptide: Sialidase (382 aa).

Position 37 (arginine 37) interacts with substrate. An intrachain disulfide couples cysteine 42 to cysteine 103. The active-site Proton acceptor is aspartate 62. BNR repeat units follow at residues 71–82, 145–156, and 210–220; these read ARSTDGGKTWNK, YKSTDDGVTFSK, and IYSTDGITWSL. Arginine 246 contributes to the substrate binding site. One copy of the BNR 4 repeat lies at 254-265; the sequence is FETKDFGKTWTE. Arginine 309 lines the substrate pocket. Tyrosine 342 serves as the catalytic Nucleophile. The active site involves glutamate 361.

It belongs to the glycosyl hydrolase 33 family. In terms of assembly, monomer.

It carries out the reaction Hydrolysis of alpha-(2-&gt;3)-, alpha-(2-&gt;6)-, alpha-(2-&gt;8)- glycosidic linkages of terminal sialic acid residues in oligosaccharides, glycoproteins, glycolipids, colominic acid and synthetic substrates.. Its function is as follows. Cleaves the terminal sialic acid (N-acetyl neuraminic acid) from carbohydrate chains in glycoproteins providing free sialic acid which can be used as carbon and energy sources. Sialidases have been suggested to be pathogenic factors in microbial infections. The chain is Sialidase (nanH) from Salmonella typhimurium (strain LT2 / SGSC1412 / ATCC 700720).